Here is an 88-residue protein sequence, read N- to C-terminus: Small ribosomal subunit protein bS20 (88 aa).

Positions 1–25 (MANTPSAKKAARKIERRTAVNRARR) are disordered.

This sequence belongs to the bacterial ribosomal protein bS20 family.

Binds directly to 16S ribosomal RNA. In Azorhizobium caulinodans (strain ATCC 43989 / DSM 5975 / JCM 20966 / LMG 6465 / NBRC 14845 / NCIMB 13405 / ORS 571), this protein is Small ribosomal subunit protein bS20.